We begin with the raw amino-acid sequence, 709 residues long: Elongation factor G (709 aa).

The tr-type G domain occupies 10–295; that stretch reads NQIRNIGIMA…AVVDYLPSPE (286 aa). GTP is bound by residues 19-26, 91-95, and 145-148; these read AHIDAGKT, DTPGH, and NKMD.

This sequence belongs to the TRAFAC class translation factor GTPase superfamily. Classic translation factor GTPase family. EF-G/EF-2 subfamily.

The protein resides in the cytoplasm. Its function is as follows. Catalyzes the GTP-dependent ribosomal translocation step during translation elongation. During this step, the ribosome changes from the pre-translocational (PRE) to the post-translocational (POST) state as the newly formed A-site-bound peptidyl-tRNA and P-site-bound deacylated tRNA move to the P and E sites, respectively. Catalyzes the coordinated movement of the two tRNA molecules, the mRNA and conformational changes in the ribosome. The chain is Elongation factor G from Bifidobacterium adolescentis (strain ATCC 15703 / DSM 20083 / NCTC 11814 / E194a).